We begin with the raw amino-acid sequence, 98 residues long: Citrate lyase acyl carrier protein (98 aa).

The residue at position 14 (Ser-14) is an O-(phosphoribosyl dephospho-coenzyme A)serine.

Belongs to the CitD family. Oligomer with a subunit composition of (alpha,beta,gamma)6.

It localises to the cytoplasm. Functionally, covalent carrier of the coenzyme of citrate lyase. In Salmonella arizonae (strain ATCC BAA-731 / CDC346-86 / RSK2980), this protein is Citrate lyase acyl carrier protein.